A 410-amino-acid chain; its full sequence is Phosphoglycerate kinase (410 aa).

Substrate is bound by residues 19–21, arginine 34, 57–60, arginine 114, and arginine 154; these read DLN and HQGK. ATP is bound by residues glutamate 332 and 358 to 361; that span reads GGHS.

Belongs to the phosphoglycerate kinase family. As to quaternary structure, homodimer.

The protein resides in the cytoplasm. It catalyses the reaction (2R)-3-phosphoglycerate + ATP = (2R)-3-phospho-glyceroyl phosphate + ADP. Its pathway is carbohydrate degradation; glycolysis; pyruvate from D-glyceraldehyde 3-phosphate: step 2/5. The protein is Phosphoglycerate kinase (pgk) of Pyrococcus horikoshii (strain ATCC 700860 / DSM 12428 / JCM 9974 / NBRC 100139 / OT-3).